The following is a 438-amino-acid chain: DNA polymerase IV 1 (438 aa).

The 181-residue stretch at 46–226 (LAHIDCDAFY…KPVTMIWGVG (181 aa)) folds into the UmuC domain. Positions 50 and 143 each coordinate Mg(2+). Residue Glu-144 is part of the active site.

It belongs to the DNA polymerase type-Y family. Monomer. It depends on Mg(2+) as a cofactor.

Its subcellular location is the cytoplasm. It carries out the reaction DNA(n) + a 2'-deoxyribonucleoside 5'-triphosphate = DNA(n+1) + diphosphate. Functionally, poorly processive, error-prone DNA polymerase involved in untargeted mutagenesis. Copies undamaged DNA at stalled replication forks, which arise in vivo from mismatched or misaligned primer ends. These misaligned primers can be extended by PolIV. Exhibits no 3'-5' exonuclease (proofreading) activity. May be involved in translesional synthesis, in conjunction with the beta clamp from PolIII. The protein is DNA polymerase IV 1 (dinB1) of Mesorhizobium japonicum (strain LMG 29417 / CECT 9101 / MAFF 303099) (Mesorhizobium loti (strain MAFF 303099)).